A 205-amino-acid chain; its full sequence is Auxin-responsive protein IAA8 (205 aa).

The disordered stretch occupies residues Met-1 to Ala-48. A compositionally biased stretch (polar residues) spans Thr-7 to Ser-19. A compositionally biased stretch (low complexity) spans Pro-25 to Ser-39. The EAR-like (transcriptional repression) motif lies at Leu-58 to Leu-62. The disordered stretch occupies residues Asp-71–His-98. Over residues Asn-73 to Val-87 the composition is skewed to polar residues. One can recognise a PB1 domain in the interval Ser-103–Asp-199.

It belongs to the Aux/IAA family. As to quaternary structure, homodimers and heterodimers. Highly expressed in green shoots. Expressed in flowers.

The protein localises to the nucleus. Functionally, aux/IAA proteins are short-lived transcriptional factors that function as repressors of early auxin response genes at low auxin concentrations. The sequence is that of Auxin-responsive protein IAA8 (IAA8) from Oryza sativa subsp. japonica (Rice).